Consider the following 342-residue polypeptide: Pre-mRNA-splicing factor 18 (342 aa).

It belongs to the PRP18 family. Interacts with the spliceosome. Part of a complex containing U4/U6 snRNPs.

It localises to the nucleus speckle. Functionally, participates in the second step of pre-mRNA splicing. In Danio rerio (Zebrafish), this protein is Pre-mRNA-splicing factor 18 (prpf18).